Reading from the N-terminus, the 406-residue chain is Type II secretion system protein F (406 aa).

Residues 1 to 171 (MAAFEYKALD…KMRSKLQQAM (171 aa)) lie on the Cytoplasmic side of the membrane. Positions 97, 151, and 155 each coordinate Ca(2+). The chain crosses the membrane as a helical span at residues 172–192 (IYPVVLVVFAVGIVAFLLAAV). The Periplasmic segment spans residues 193–223 (VPKIVGQFVQMGQALPASTQFLLDASDFLQH). The chain crosses the membrane as a helical span at residues 224-244 (WGISLLVGLLMLIYLVRWLLT). The Cytoplasmic segment spans residues 245-368 (KPDIRLRWDR…QDNSFESTVN (124 aa)). The chain crosses the membrane as a helical span at residues 369–389 (IALGIFTPALIALMAGMVLFI). At 390 to 406 (VMATLMPILEMNNLMSR) the chain is on the periplasmic side.

The protein belongs to the GSP F family. Type II secretion system is composed of four main components: the outer membrane complex, the inner membrane complex, the cytoplasmic secretion ATPase and the periplasm-spanning pseudopilus. Homodimer. Interacts with EpsE/GspE and EpsL/GspL components.

It is found in the cell inner membrane. Functionally, component of the type II secretion system inner membrane complex required for the energy-dependent secretion of extracellular factors such as proteases and toxins from the periplasm. This is Type II secretion system protein F (epsF) from Vibrio cholerae serotype O1 (strain ATCC 39315 / El Tor Inaba N16961).